The sequence spans 302 residues: ATP synthase subunit b 1 (302 aa).

The helical transmembrane segment at 5 to 22 (WFTVIAQGINFLLLLWLL) threads the bilayer. The interval 278 to 302 (GLPENEGTDNPEANPPHAEAKIPHA) is disordered.

The protein belongs to the ATPase B chain family. As to quaternary structure, F-type ATPases have 2 components, F(1) - the catalytic core - and F(0) - the membrane proton channel. F(1) has five subunits: alpha(3), beta(3), gamma(1), delta(1), epsilon(1). F(0) has three main subunits: a(1), b(2) and c(10-14). The alpha and beta chains form an alternating ring which encloses part of the gamma chain. F(1) is attached to F(0) by a central stalk formed by the gamma and epsilon chains, while a peripheral stalk is formed by the delta and b chains.

It localises to the cell inner membrane. In terms of biological role, f(1)F(0) ATP synthase produces ATP from ADP in the presence of a proton or sodium gradient. F-type ATPases consist of two structural domains, F(1) containing the extramembraneous catalytic core and F(0) containing the membrane proton channel, linked together by a central stalk and a peripheral stalk. During catalysis, ATP synthesis in the catalytic domain of F(1) is coupled via a rotary mechanism of the central stalk subunits to proton translocation. Its function is as follows. Component of the F(0) channel, it forms part of the peripheral stalk, linking F(1) to F(0). The polypeptide is ATP synthase subunit b 1 (Pseudoalteromonas atlantica (strain T6c / ATCC BAA-1087)).